Reading from the N-terminus, the 331-residue chain is MPAKMLKWLLIHIFLIHSIFCQDAPAQMPFFANSDPMMSKLSQIQFADAPTLKGDKYPDVDAHRIIAPIISPIMEVFDQMKENQRARDQAEKIRKDREDHPLSTSRSLWEMFQRLQRPTTTTTEAPPLIERLFKPYIEPWQKQLDDFSKDMAGITLIPTTTTTPAPTTTTTPNFLEKSLSMFFPSLRRKPQSIPTLPPTTTPTPRLFDPEMFDRLFFKRDKRQATIAPAPKFDIFTVPPPPPLFQEWEKPILSLSNPFTLNPLMKMFTTPSPPQTLAPLPKIPEPNPYEIKKGLPEPQFKLQDPFYNPLFPSRKSKMFDFLAGGEAGRLLG.

The N-terminal stretch at 1–21 (MPAKMLKWLLIHIFLIHSIFC) is a signal peptide.

In terms of tissue distribution, expressed in the hypodermal syncitium but not in hypodermal seam cells.

It localises to the secreted. Functionally, negative regulator of the osmotic stress response. Acts via the transmembrane protein ptr-23. This chain is Osmotic avoidance abnormal protein 8 (osm-8), found in Caenorhabditis elegans.